The primary structure comprises 86 residues: Weak neurotoxin 6 (86 aa).

An N-terminal signal peptide occupies residues M1 to T21. 5 cysteine pairs are disulfide-bonded: C24–C45, C27–C32, C38–C63, C67–C78, and C79–C84.

The protein belongs to the three-finger toxin family. Ancestral subfamily. Orphan group II sub-subfamily. Expressed by the venom gland.

Its subcellular location is the secreted. In terms of biological role, binds with low affinity to muscular (alpha-1-beta-1-delta-epsilon/CHRNA1-CHRNB1-CHRND-CHRNE) and very low affinity to neuronal (alpha-7/CHRNA7) nicotinic acetylcholine receptor (nAChR). This Naja sputatrix (Malayan spitting cobra) protein is Weak neurotoxin 6.